Reading from the N-terminus, the 281-residue chain is Acetyl-coenzyme A carboxylase carboxyl transferase subunit beta (281 aa).

In terms of domain architecture, CoA carboxyltransferase N-terminal spans 23-281 (LWSKCEDCGA…KTLAMMRVEG (259 aa)). Zn(2+) contacts are provided by Cys27, Cys30, Cys46, and Cys49. The C4-type zinc-finger motif lies at 27–49 (CEDCGAMLHRRQLEENLNTCNEC).

The protein belongs to the AccD/PCCB family. In terms of assembly, acetyl-CoA carboxylase is a heterohexamer composed of biotin carboxyl carrier protein (AccB), biotin carboxylase (AccC) and two subunits each of ACCase subunit alpha (AccA) and ACCase subunit beta (AccD). Zn(2+) serves as cofactor.

Its subcellular location is the cytoplasm. The enzyme catalyses N(6)-carboxybiotinyl-L-lysyl-[protein] + acetyl-CoA = N(6)-biotinyl-L-lysyl-[protein] + malonyl-CoA. It functions in the pathway lipid metabolism; malonyl-CoA biosynthesis; malonyl-CoA from acetyl-CoA: step 1/1. Functionally, component of the acetyl coenzyme A carboxylase (ACC) complex. Biotin carboxylase (BC) catalyzes the carboxylation of biotin on its carrier protein (BCCP) and then the CO(2) group is transferred by the transcarboxylase to acetyl-CoA to form malonyl-CoA. This chain is Acetyl-coenzyme A carboxylase carboxyl transferase subunit beta, found in Chlorobium luteolum (strain DSM 273 / BCRC 81028 / 2530) (Pelodictyon luteolum).